A 460-amino-acid chain; its full sequence is T-box transcription factor TBX1 (460 aa).

2 disordered regions span residues 30–53 (LNTP…ESQF) and 67–99 (GSNS…TLVK). The segment covering 67-84 (GSNSAQAPAQGDSGTSNC) has biased composition (polar residues). The segment at residues 116–294 (LWDEFNQLGT…SNPFAKGFRD (179 aa)) is a DNA-binding region (T-box). Disordered stretches follow at residues 317-355 (RTRN…DPTH) and 376-400 (PLTA…PDTL). Residues 320–330 (NPMSSPPQQNG) are compositionally biased toward polar residues. Residues 331-344 (TEKEDSRREYDRDP) are compositionally biased toward basic and acidic residues. Positions 418 to 429 (KTRPSPYPSPSI) match the Nuclear localization signal motif.

In terms of assembly, binds DNA as a dimer. In terms of tissue distribution, expressed in the ear and mesendodermal components of pharyngeal arches.

Its subcellular location is the nucleus. In terms of biological role, probable transcriptional regulator involved in developmental processes. Binds to the palindromic T site 5'-TTCACACCTAGGTGTGAA-3' DNA sequence. Is required for normal development of the pharyngeal arch arteries. Acts cell autonomously in the pharyngeal mesendoderm and influences the development of neural crest-derived cartilages secondarily. The chain is T-box transcription factor TBX1 (tbx1) from Danio rerio (Zebrafish).